A 342-amino-acid polypeptide reads, in one-letter code: Alpha-(1,3)-fucosyltransferase 7 (342 aa).

Residues 1–14 (MNNAGHGPTRRLRG) are Cytoplasmic-facing. Residues 15–36 (LGVLAGVALLAALWLLWLLGSA) traverse the membrane as a helical; Signal-anchor for type II membrane protein segment. Over 37 to 342 (PRGTPAPQPT…YEDLEGWFQA (306 aa)) the chain is Lumenal. Residues C68 and C76 are joined by a disulfide bond. N81 carries an N-linked (GlcNAc...) asparagine glycan. Residues C211 and C214 are joined by a disulfide bond. An N-linked (GlcNAc...) asparagine glycan is attached at N291. Residues C318 and C321 are joined by a disulfide bond.

It belongs to the glycosyltransferase 10 family. N-glycosylated. As to expression, leukocytic/myeloid lineage cells.

Its subcellular location is the golgi apparatus. The protein localises to the golgi stack membrane. It catalyses the reaction an N-acetyl-alpha-neuraminyl-(2-&gt;3)-beta-D-galactosyl-(1-&gt;4)-N-acetyl-beta-D-glucosaminyl derivative + GDP-beta-L-fucose = an alpha-Neu5Ac-(2-&gt;3)-beta-D-Gal-(1-&gt;4)-[alpha-L-Fuc-(1-&gt;3)]-beta-D-GlcNAc derivative + GDP + H(+). It carries out the reaction a neolactoside IV(3)-alpha-NeuAc-nLc4Cer + GDP-beta-L-fucose = a neolactoside IV(3)-alpha-NeuNAc,III(3)-alpha-Fuc-nLc4Cer + GDP + H(+). The catalysed reaction is a neolactoside VI(3)-alpha-NeuNAc-nLc6Cer + GDP-beta-L-fucose = a neolactoside VI(3)-alpha-NeuAc,V(3)-alphaFuc-nLc6Cer + GDP + H(+). The enzyme catalyses an alpha-Neu5Ac-(2-&gt;3)-beta-D-Gal-(1-&gt;4)-beta-D-GlcNAc-(1-&gt;3)-beta-D-Gal-(1-&gt;4)-[alpha-L-Fuc-(1-&gt;3)]-beta-D-GlcNAc derivative + GDP-beta-L-fucose = an alpha-Neu5Ac-(2-&gt;3)-beta-D-Gal-(1-&gt;4)-[alpha-L-Fuc-(1-&gt;3)]-beta-D-GlcNAc-(1-&gt;3)-beta-D-Gal-(1-&gt;4)-[alpha-L-Fuc-(1-&gt;3)]-beta-D-GlcNAc derivative + GDP + H(+). It catalyses the reaction an alpha-Neu5Ac-(2-&gt;3)-beta-D-Gal-(1-&gt;4)-beta-D-GlcNAc6S derivative + GDP-beta-L-fucose = an alpha-Neu5Ac-(2-&gt;3)-beta-D-Gal-(1-&gt;4)-[alpha-L-Fuc-(1-&gt;3)]-beta-D-GlcNAc6S derivative + GDP + H(+). It carries out the reaction alpha-Neu5Ac-(2-&gt;3)-beta-D-Gal-(1-&gt;4)-beta-D-GlcNAc-(1-&gt;3)-beta-D-Gal-(1-&gt;4)-D-Glc + GDP-beta-L-fucose = alpha-Neu5Ac-(2-&gt;3)-beta-D-Gal-(1-&gt;4)-[alpha-L-Fuc-(1-&gt;3)]-beta-D-GlcNAc-(1-&gt;3)-beta-D-Gal-(1-&gt;4)-D-Glc + GDP + H(+). The catalysed reaction is alpha-Neu5Ac-(2-&gt;3)-beta-D-Gal-(1-&gt;4)-beta-D-GlcNAc-(1-&gt;3)-beta-D-Gal-(1-&gt;4)-[alpha-L-Fuc-(1-&gt;3)]-beta-D-GlcNAc-(1-&gt;3)-beta-D-Gal-(1-&gt;4)-beta-D-GlcNAc + GDP-beta-L-fucose = alpha-Neu5Ac-(2-&gt;3)-beta-D-Gal-(1-&gt;4)-[alpha-L-Fuc-(1-&gt;3)]-beta-D-GlcNAc-(1-&gt;3)-beta-D-Gal-(1-&gt;4)-[alpha-L-Fuc-(1-&gt;3)]-beta-D-GlcNAc-(1-&gt;3)-beta-D-Gal-(1-&gt;4)-beta-D-GlcNAc + GDP + H(+). The enzyme catalyses alpha-Neu5Ac-(2-&gt;3)-beta-D-Gal-(1-&gt;4)-beta-D-GlcNAc-(1-&gt;3)-beta-D-Gal-(1-&gt;4)-beta-D-GlcNAc-(1-&gt;3)-beta-D-Gal-(1-&gt;4)-beta-D-GlcNAc + GDP-beta-L-fucose = alpha-Neu5Ac-(2-&gt;3)-beta-D-Gal-(1-&gt;4)-[alpha-L-Fuc-(1-&gt;3)]-beta-D-GlcNAc-(1-&gt;3)-beta-D-Gal-(1-&gt;4)-beta-D-GlcNAc-(1-&gt;3)-beta-D-Gal-(1-&gt;4)-beta-D-GlcNAc + GDP + H(+). It participates in protein modification; protein glycosylation. Inhibited by NaCl. Inhibited by GDP in a concentration dependent manner, with an IC(50) value of 93 uM. Also inhibited by GMP and GTP. Inhibited by N-ethylmaleimide. Activated by poly(ethylene glycol) by enhancing the thermal stability of FUT7. Activated by Mn2+, Ca2+, and Mg2+. Both panosialin A and B inhibit activity with IC(50) values of 4.8 and 5.3 ug/ml, respectively. Inhibited by gallic acid (GA) and (-)-epigallocatechin gallate (EGCG) in a time-dependent and irreversible manner with IC(50) values of 60 and 700 nM, respectively. Its function is as follows. Catalyzes the transfer of L-fucose, from a guanosine diphosphate-beta-L-fucose, to the N-acetyl glucosamine (GlcNAc) of a distal alpha2,3 sialylated lactosamine unit of a glycoprotein or a glycolipid-linked sialopolylactosamines chain through an alpha-1,3 glycosidic linkage and participates in the final fucosylation step in the biosynthesis of the sialyl Lewis X (sLe(x)), a carbohydrate involved in cell and matrix adhesion during leukocyte trafficking and fertilization. In vitro, also synthesizes sialyl-dimeric-Lex structures, from VIM-2 structures and both di-fucosylated and trifucosylated structures from mono-fucosylated precursors. However does not catalyze alpha 1-3 fucosylation when an internal alpha 1-3 fucosylation is present in polylactosamine chain and the fucosylation rate of the internal GlcNAc residues is reduced once fucose has been added to the distal GlcNAc. Also catalyzes the transfer of a fucose from GDP-beta-fucose to the 6-sulfated a(2,3)sialylated substrate to produce 6-sulfo sLex mediating significant L-selectin-dependent cell adhesion. Through sialyl-Lewis(x) biosynthesis, can control SELE- and SELP-mediated cell adhesion with leukocytes and allows leukocytes tethering and rolling along the endothelial tissue thereby enabling the leukocytes to accumulate at a site of inflammation. May enhance embryo implantation through sialyl Lewis X (sLeX)-mediated adhesion of embryo cells to endometrium. May affect insulin signaling by up-regulating the phosphorylation and expression of some signaling molecules involved in the insulin-signaling pathway through SLe(x) which is present on the glycans of the INSRR alpha subunit. In Homo sapiens (Human), this protein is Alpha-(1,3)-fucosyltransferase 7.